The following is a 421-amino-acid chain: Glutamate-1-semialdehyde 2,1-aminomutase (421 aa).

An N6-(pyridoxal phosphate)lysine modification is found at lysine 261.

It belongs to the class-III pyridoxal-phosphate-dependent aminotransferase family. HemL subfamily. Pyridoxal 5'-phosphate is required as a cofactor.

It is found in the cytoplasm. It carries out the reaction (S)-4-amino-5-oxopentanoate = 5-aminolevulinate. Its pathway is porphyrin-containing compound metabolism; protoporphyrin-IX biosynthesis; 5-aminolevulinate from L-glutamyl-tRNA(Glu): step 2/2. This Thermoplasma acidophilum (strain ATCC 25905 / DSM 1728 / JCM 9062 / NBRC 15155 / AMRC-C165) protein is Glutamate-1-semialdehyde 2,1-aminomutase (hemL).